The chain runs to 191 residues: Putative glutathione-dependent formaldehyde-activating enzyme (191 aa).

A CENP-V/GFA domain is found at 20-166; the sequence is FPGGNLYCLC…FQSLGLQTYD (147 aa). 7 residues coordinate Zn(2+): cysteine 27, cysteine 29, cysteine 48, cysteine 50, cysteine 53, cysteine 95, and cysteine 98.

It belongs to the Gfa family. Requires Zn(2+) as cofactor.

The catalysed reaction is S-(hydroxymethyl)glutathione = glutathione + formaldehyde. Its pathway is one-carbon metabolism; formaldehyde degradation; formate from formaldehyde (glutathione route): step 1/3. In terms of biological role, catalyzes the condensation of formaldehyde and glutathione to S-hydroxymethylglutathione. This chain is Putative glutathione-dependent formaldehyde-activating enzyme, found in Aspergillus flavus (strain ATCC 200026 / FGSC A1120 / IAM 13836 / NRRL 3357 / JCM 12722 / SRRC 167).